A 1039-amino-acid chain; its full sequence is Probable calcium-transporting ATPase 9, plasma membrane-type (1039 aa).

Topologically, residues 1-175 are cytoplasmic; the sequence is MEKLDRYLQE…FVWDALQDMT (175 aa). Transmembrane regions (helical) follow at residues 176-196 and 199-219; these read LIIL…TEGW and GMYD…VTAV. At 220 to 250 the chain is on the cytoplasmic side; sequence SDYKQSLQFKELDNEKKKIFIHVTRDGRRQK. A run of 2 helical transmembrane segments spans residues 251–271 and 353–373; these read ISIY…DQVP and VATI…LVLL. Topologically, residues 374–406 are cytoplasmic; that stretch reads VRFLIDKGMTVGLLKWYSTDALTIVNYFATAVT. Residues 407–427 form a helical membrane-spanning segment; the sequence is IIVVAVPEGLPLAVTLSLAFA. Aspartate 456 functions as the 4-aspartylphosphate intermediate in the catalytic mechanism. The Mg(2+) site is built by aspartate 758 and aspartate 762. The chain crosses the membrane as a helical span at residues 825 to 845; sequence IVALVINFVSACIIGSAPLTA. Over 846–847 the chain is Cytoplasmic; it reads VQ. Helical transmembrane passes span 848-868 and 892-912; these read LLWV…TEPP and NIMG…FGGE. Over 913 to 960 the chain is Cytoplasmic; it reads RLLNIKGADSKSIINTLIFNSFVFCQVFNEINSREMQKINVFRGIISN. Helical transmembrane passes span 961-981 and 995-1015; these read WIFI…IEFL and WLLS…LKCI. Residues 1016–1039 lie on the Cytoplasmic side of the membrane; it reads PVGSGETSATPNGYRPLANGPDDI.

It belongs to the cation transport ATPase (P-type) (TC 3.A.3) family. Type IIB subfamily.

It is found in the membrane. It catalyses the reaction Ca(2+)(in) + ATP + H2O = Ca(2+)(out) + ADP + phosphate + H(+). Activated by calmodulin. Functionally, this magnesium-dependent enzyme catalyzes the hydrolysis of ATP coupled with the translocation of calcium from the cytosol out of the cell, into the endoplasmic reticulum, or into organelles. This chain is Probable calcium-transporting ATPase 9, plasma membrane-type, found in Oryza sativa subsp. japonica (Rice).